The primary structure comprises 246 residues: Putative outer membrane protein YiaT (246 aa).

A signal peptide spans 1 to 21; it reads MLINRNIVALFALPFMASATA.

The protein belongs to the MipA/OmpV family.

It localises to the cell outer membrane. This chain is Putative outer membrane protein YiaT (yiaT), found in Escherichia coli O157:H7.